The primary structure comprises 278 residues: Putative transcription factor kapC (278 aa).

The segment covering 1-10 (MQPALAPAPH) has biased composition (pro residues). Residues 1–121 (MQPALAPAPH…QNRAAQRAFR (121 aa)) are disordered. The segment covering 56-68 (PTATTSPRDQNNI) has biased composition (polar residues). The bZIP domain maps to 103–166 (PLSTSKRAAQ…EYVINLQSRL (64 aa)). Residues 104–127 (LSTSKRAAQNRAAQRAFRQRKESY) form a basic motif region. Low complexity predominate over residues 109–119 (RAAQNRAAQRA). The segment at 131–162 (LEEQVKEYEVMSQEYKALQAENYQLREYVINL) is leucine-zipper. The tract at residues 173–278 (VPELPGNIDL…PPTHGLPMVS (106 aa)) is disordered. Over residues 198–214 (PGQAGASAPPQGSPQSQ) the composition is skewed to low complexity. Over residues 215–226 (VSIANDDMNSLN) the composition is skewed to polar residues. The segment covering 254–269 (GRGDETADPSETKTEP) has biased composition (basic and acidic residues).

The protein belongs to the bZIP family.

The protein resides in the nucleus. Putative transcription factor. This Emericella nidulans (strain FGSC A4 / ATCC 38163 / CBS 112.46 / NRRL 194 / M139) (Aspergillus nidulans) protein is Putative transcription factor kapC (kapC).